The following is a 256-amino-acid chain: MLPWLPAHRVAFPAVEHALREPDGLLAAGGDLTPAWLRCAYRHGIFPWFAPGEPILWWSPDPRLVLFPEEIHVRRSLAKRLRNAGFTVTFDHAFEAVITACATTRAAAEGTWITPAMHAAYYRLHIEGDAHSVEVWRDGELVGGLYGIALGGVFFGESMFSRVADASKVALVHLARHLAAHGGRLIDCQVHTPHLASLGARCIARTTFIDYLDQYVSAPVSSSLWPAAPSADGCTGASRHGPGADMRRGDMSREST.

The disordered stretch occupies residues 232 to 256 (DGCTGASRHGPGADMRRGDMSREST). A compositionally biased stretch (basic and acidic residues) spans 245–256 (DMRRGDMSREST).

This sequence belongs to the L/F-transferase family.

The protein localises to the cytoplasm. It carries out the reaction N-terminal L-lysyl-[protein] + L-leucyl-tRNA(Leu) = N-terminal L-leucyl-L-lysyl-[protein] + tRNA(Leu) + H(+). The catalysed reaction is N-terminal L-arginyl-[protein] + L-leucyl-tRNA(Leu) = N-terminal L-leucyl-L-arginyl-[protein] + tRNA(Leu) + H(+). The enzyme catalyses L-phenylalanyl-tRNA(Phe) + an N-terminal L-alpha-aminoacyl-[protein] = an N-terminal L-phenylalanyl-L-alpha-aminoacyl-[protein] + tRNA(Phe). Functions in the N-end rule pathway of protein degradation where it conjugates Leu, Phe and, less efficiently, Met from aminoacyl-tRNAs to the N-termini of proteins containing an N-terminal arginine or lysine. The chain is Leucyl/phenylalanyl-tRNA--protein transferase from Chromohalobacter salexigens (strain ATCC BAA-138 / DSM 3043 / CIP 106854 / NCIMB 13768 / 1H11).